The sequence spans 102 residues: MIKSELVQRIAEHNPHLYQRDVENIVNAILEEIVAALARGDRVELRGFGAFSVKHRPARAGRNPRTGEHVPVEQKSVPFFKTGKEMRERLNRDNGISAETGA.

It belongs to the bacterial histone-like protein family. As to quaternary structure, heterodimer of an alpha and a beta chain.

In terms of biological role, this protein is one of the two subunits of integration host factor, a specific DNA-binding protein that functions in genetic recombination as well as in transcriptional and translational control. This Rhodopseudomonas palustris (strain BisA53) protein is Integration host factor subunit beta.